A 400-amino-acid chain; its full sequence is MRICIFMARGLEGCGVTKFSLEQRDWFIKNGHEVTLVYAKDKSFTRTSSHDHKSFSIPVILAKEYDKALKLVNDCDILIINSVPATSVQEATINNYKKLLDNIKPSIRVVVYQHDHSVLSLRRNLGLEETVRRADVIFSHSDNGDFNKVLMKEWYPETVSLFDDIEEAPTVYNFQPPMDIVKVRSTYWKDVSEINMNINRWIGRTTTWKGFYQMFDFHEKFLKPAGKSTVMEGLERSPAFIAIKEKGIPYEYYGNREIDKMNLAPNQPAQILDCYINSEMLERMSKSGFGYQLSKLNQKYLQRSLEYTHLELGACGTIPVFWKSTGENLKFRVDNTPLTSHDSGIIWFDENDMESTFERIKELSSDRALYDREREKAYEFLYQHQDSSFCFKEQFDIITK.

Interacts with clamp protein gp45.

The enzyme catalyses Transfers an alpha-D-glucosyl residue from UDP-glucose to a hydroxymethylcytosine residue in DNA.. It participates in genetic information processing; DNA modification. In terms of biological role, catalyzes the transfer of glucose from uridine diphosphoglucose to 5-hydroxymethyl cytosine of T4 DNA to yield glucosyl 5-hydroxymethyl cytosine (glc-HMC). This DNA process seems to occur immediately after DNA synthesis since the DNA alpha-glucosyltransferase interacts with the clamp protein gp45. The glc-HMC modification protects the phage genome against its own nucleases and the host restriction endonuclease system. The glc-HMC modification also protects against the host CRISPR-Cas9 defense system. The polypeptide is DNA alpha-glucosyltransferase (agt) (Escherichia coli (Bacteriophage T4)).